A 342-amino-acid polypeptide reads, in one-letter code: N-acetyl-gamma-glutamyl-phosphate reductase (342 aa).

C146 is an active-site residue.

Belongs to the NAGSA dehydrogenase family. Type 1 subfamily.

The protein resides in the cytoplasm. It catalyses the reaction N-acetyl-L-glutamate 5-semialdehyde + phosphate + NADP(+) = N-acetyl-L-glutamyl 5-phosphate + NADPH + H(+). The protein operates within amino-acid biosynthesis; L-arginine biosynthesis; N(2)-acetyl-L-ornithine from L-glutamate: step 3/4. Its function is as follows. Catalyzes the NADPH-dependent reduction of N-acetyl-5-glutamyl phosphate to yield N-acetyl-L-glutamate 5-semialdehyde. This chain is N-acetyl-gamma-glutamyl-phosphate reductase, found in Thermobifida fusca (strain YX).